A 262-amino-acid chain; its full sequence is Ribosomal RNA small subunit methyltransferase G (262 aa).

S-adenosyl-L-methionine is bound by residues glycine 72, leucine 77, and arginine 142. Positions 212–262 are disordered; that stretch reads RSSQLSRAEGRKGRGDGERHDGRQVRRTARDSRRSREVDRDQPTRGQSRST. Residues 219 to 254 are compositionally biased toward basic and acidic residues; that stretch reads AEGRKGRGDGERHDGRQVRRTARDSRRSREVDRDQP.

It belongs to the methyltransferase superfamily. RNA methyltransferase RsmG family.

It is found in the cytoplasm. Its function is as follows. Specifically methylates the N7 position of guanine in position 518 of 16S rRNA. The chain is Ribosomal RNA small subunit methyltransferase G from Frankia alni (strain DSM 45986 / CECT 9034 / ACN14a).